The sequence spans 179 residues: Large ribosomal subunit protein uL5 (179 aa).

This sequence belongs to the universal ribosomal protein uL5 family. As to quaternary structure, part of the 50S ribosomal subunit; part of the 5S rRNA/L5/L18/L25 subcomplex. Contacts the 5S rRNA and the P site tRNA. Forms a bridge to the 30S subunit in the 70S ribosome.

This is one of the proteins that bind and probably mediate the attachment of the 5S RNA into the large ribosomal subunit, where it forms part of the central protuberance. In the 70S ribosome it contacts protein S13 of the 30S subunit (bridge B1b), connecting the 2 subunits; this bridge is implicated in subunit movement. Contacts the P site tRNA; the 5S rRNA and some of its associated proteins might help stabilize positioning of ribosome-bound tRNAs. The chain is Large ribosomal subunit protein uL5 from Buchnera aphidicola subsp. Acyrthosiphon pisum (strain APS) (Acyrthosiphon pisum symbiotic bacterium).